The sequence spans 527 residues: Amino acid transporter heavy chain SLC3A2 (527 aa).

Positions 1 to 31 (MSQDTEVDMKDVELNELEPEKQPMNAADGAA) are disordered. Over 1–75 (MSQDTEVDMK…AGSPGWVRTR (75 aa)) the chain is Cytoplasmic. S2 carries the post-translational modification Phosphoserine. At T5 the chain carries Phosphothreonine. Positions 7-21 (VDMKDVELNELEPEK) are enriched in basic and acidic residues. A Glycyl lysine isopeptide (Lys-Gly) (interchain with G-Cter in ubiquitin) cross-link involves residue K42. Position 58 is a phosphoserine (S58). A Glycyl lysine isopeptide (Lys-Gly) (interchain with G-Cter in SUMO2) cross-link involves residue K59. The helical; Signal-anchor for type II membrane protein transmembrane segment at 76 to 98 (WALLLLFWLGWLGMLAGAVVIIV) threads the bilayer. Over 99–527 (RAPRCRELPV…GLLLQFPFVA (429 aa)) the chain is Extracellular. Residues N166, N249, N259, and N263 are each glycosylated (N-linked (GlcNAc...) asparagine). S300 carries the phosphoserine modification. 3 N-linked (GlcNAc...) asparagine glycosylation sites follow: N318, N386, and N400. S421 is subject to Phosphoserine. N510 carries N-linked (GlcNAc...) asparagine glycosylation.

It belongs to the SLC3A transporter family. In terms of assembly, disulfide-linked heterodimer with a non-glycosylated light chain (SLC7A5, SLC7A6, SLC7A7, SLC7A8, SLC7A10 or SLC7A11). Interacts with TLCD3A/CT120 and ICAM1. Constitutively and specifically associates with beta-1 integrins (alpha-2/beta-1, alpha-3/beta-1, alpha-5/beta-1 and alpha-6/beta-1), but minimally with alpha-4/beta-1. Interacts with LAPTM4B; recruits SLC3A2 and SLC7A5 to lysosomes to promote leucine uptake into these organelles and is required for mTORC1 activation. Phosphorylation on Ser-300 and on Ser-421 by ecto-protein kinases favors heterotypic cell-cell interactions. Post-translationally, N-glycosylated; N-glycosylation is crucial for trafficking and stability of SLC3A2 to the plasma membrane. As to expression, in brain expressed on capillary endothelia in cerebral cortex (at protein level). Highest expression in kidney, jejunum, ileum, colon, placenta, testis and spleen. Lower levels found in liver, lung and brain with weakest expression in heart. Expressed in retina, inner blood-retinal barrier of retina, retinal vascular endothelial cells. Also expressed in C6 glioma cells and in the retinal capillary endothelial cell line TR-iBRB2.

The protein localises to the apical cell membrane. It localises to the cell membrane. It is found in the cell junction. The protein resides in the lysosome membrane. Its subcellular location is the melanosome. The protein localises to the basolateral cell membrane. Its function is as follows. Acts as a chaperone that facilitates biogenesis and trafficking of functional transporters heterodimers to the plasma membrane. Forms heterodimer with SLC7 family transporters (SLC7A5, SLC7A6, SLC7A7, SLC7A8, SLC7A10 and SLC7A11), a group of amino-acid antiporters. Heterodimers function as amino acids exchangers, the specificity of the substrate depending on the SLC7A subunit. Heterodimers formed by SLC3A2/SLC7A6 or SLC3A2/SLC7A7 mediate the uptake of dibasic amino acids. Heterodimer SLC3A2/SLC7A11 functions as an antiporter by mediating the exchange of extracellular anionic L-cystine and intracellular L-glutamate across the cellular plasma membrane. SLC3A2/SLC7A10 translocates small neutral L- and D-amino acids across the plasma membrane. SLC3A2/SLC75 or SLC3A2/SLC7A8 translocates neutral amino acids with broad specificity, thyroid hormones and L-DOPA. SLC3A2 is essential for plasma membrane localization, stability, and the transport activity of SLC7A5 and SLC7A8. When associated with LAPTM4B, the heterodimer SLC7A5 is recruited to lysosomes to promote leucine uptake into these organelles, and thereby mediates mTORC1 activation. Modulates integrin-related signaling and is essential for integrin-dependent cell spreading, migration and tumor progression. The polypeptide is Amino acid transporter heavy chain SLC3A2 (Rattus norvegicus (Rat)).